Here is a 397-residue protein sequence, read N- to C-terminus: Phosphoglycerate kinase (397 aa).

Substrate-binding positions include 25-27 (DLN), arginine 41, 64-67 (HLGR), arginine 118, and arginine 151. ATP is bound by residues lysine 202, glutamate 324, and 350-353 (GGDT).

This sequence belongs to the phosphoglycerate kinase family. As to quaternary structure, monomer.

The protein localises to the cytoplasm. It carries out the reaction (2R)-3-phosphoglycerate + ATP = (2R)-3-phospho-glyceroyl phosphate + ADP. It participates in carbohydrate degradation; glycolysis; pyruvate from D-glyceraldehyde 3-phosphate: step 2/5. The polypeptide is Phosphoglycerate kinase (Leptothrix cholodnii (strain ATCC 51168 / LMG 8142 / SP-6) (Leptothrix discophora (strain SP-6))).